Here is a 308-residue protein sequence, read N- to C-terminus: tRNA pseudouridine synthase B (308 aa).

Aspartate 47 serves as the catalytic Nucleophile.

The protein belongs to the pseudouridine synthase TruB family. Type 1 subfamily.

The catalysed reaction is uridine(55) in tRNA = pseudouridine(55) in tRNA. Its function is as follows. Responsible for synthesis of pseudouridine from uracil-55 in the psi GC loop of transfer RNAs. The polypeptide is tRNA pseudouridine synthase B (Xanthomonas campestris pv. campestris (strain 8004)).